The primary structure comprises 344 residues: tRNA dimethylallyltransferase (344 aa).

43 to 50 (GPTCCGKS) is a binding site for ATP. 45-50 (TCCGKS) serves as a coordination point for substrate. Residues 68–71 (DSMQ) are interaction with substrate tRNA.

The protein belongs to the IPP transferase family. As to quaternary structure, monomer. Mg(2+) serves as cofactor.

The catalysed reaction is adenosine(37) in tRNA + dimethylallyl diphosphate = N(6)-dimethylallyladenosine(37) in tRNA + diphosphate. In terms of biological role, catalyzes the transfer of a dimethylallyl group onto the adenine at position 37 in tRNAs that read codons beginning with uridine, leading to the formation of N6-(dimethylallyl)adenosine (i(6)A). The sequence is that of tRNA dimethylallyltransferase from Protochlamydia amoebophila (strain UWE25).